The primary structure comprises 258 residues: Cell division protein ZapD (258 aa).

This sequence belongs to the ZapD family. In terms of assembly, interacts with FtsZ.

It localises to the cytoplasm. Its function is as follows. Cell division factor that enhances FtsZ-ring assembly. Directly interacts with FtsZ and promotes bundling of FtsZ protofilaments, with a reduction in FtsZ GTPase activity. This Coxiella burnetii (strain RSA 331 / Henzerling II) protein is Cell division protein ZapD.